Reading from the N-terminus, the 1661-residue chain is Microtubule cross-linking factor 2 (1661 aa).

Residues 1–187 (MEAPAAEPPV…EPSVAASSVG (187 aa)) are disordered. Low complexity-rich tracts occupy residues 76–94 (AVAP…VRTG) and 133–149 (LLGL…SAAG). The span at 167-176 (QQPPRPPASP) shows a compositional bias: pro residues. A required for association with Golgi apparatus membrane region spans residues 211-240 (PSGLVRELEELRSENDYLKDEIEELRAEML). Coiled-coil stretches lie at residues 218 to 281 (LEEL…AERR) and 310 to 351 (SMRL…LQTE). The disordered stretch occupies residues 353–373 (ERPREHSLKKRGTRSLGKADK). Coiled coils occupy residues 450-484 (LKLV…MKDH), 820-865 (IKEL…LKED), and 1083-1117 (SQEK…LQKA). Position 1169 is a phosphoserine (Ser-1169). The interval 1196-1221 (AFGFVSSEPGDPEKDTKEKPGLSSRD) is disordered. Residues 1206–1215 (DPEKDTKEKP) are compositionally biased toward basic and acidic residues. The residue at position 1255 (Ser-1255) is a Phosphoserine. Disordered regions lie at residues 1432–1456 (RPCC…DSSK), 1538–1563 (RAPS…ASYH), and 1636–1661 (HSPS…PPSE). Residues 1652–1661 (GEERALPPSE) are compositionally biased toward basic and acidic residues.

This sequence belongs to the MTCL family. In terms of assembly, interacts with CLASP1 and CLASP2. The C-terminal 25 kDa form occurs as a monomer. Proteolytically cleaved in primary hepatocytes into a C-terminal 80 kDa form. Proteolytically cleaved into a C-terminal SOGA 25 kDa form that is detected in plasma. In terms of processing, phosphorylated during mitosis in a CDK1-dependent manner.

It is found in the cytoplasm. Its subcellular location is the cytoskeleton. It localises to the golgi apparatus membrane. The protein resides in the midbody. The protein localises to the secreted. Functionally, microtubule-associated factor that enables integration of the centrosomal and Golgi-associated microtubules on the Golgi membrane, supporting directional migration. Preferentially acts on the perinuclear microtubules accumulated around the Golgi. Associates with the Golgi membrane through the N-terminal coiled-coil region and directly binds microtubules through the C-terminal domain. Required for faithful chromosome segregation during mitosis. Regulates autophagy by playing a role in the reduction of glucose production in an adiponectin- and insulin-dependent manner. This is Microtubule cross-linking factor 2 from Homo sapiens (Human).